The following is a 134-amino-acid chain: Prefoldin subunit 4 (134 aa).

Ala2 is modified (N-acetylalanine). Ser125 carries the phosphoserine modification.

The protein belongs to the prefoldin subunit beta family. In terms of assembly, heterohexamer of two PFD-alpha type and four PFD-beta type subunits. Interacts with URI1; the interaction is phosphorylation-dependent and occurs in a growth-dependent manner.

It is found in the nucleus. The protein localises to the cytoplasm. Its subcellular location is the mitochondrion. In terms of biological role, binds specifically to cytosolic chaperonin (c-CPN) and transfers target proteins to it. Binds to nascent polypeptide chain and promotes folding in an environment in which there are many competing pathways for nonnative proteins. This chain is Prefoldin subunit 4 (PFDN4), found in Bos taurus (Bovine).